The primary structure comprises 144 residues: UPF0102 protein Veis_0630 (144 aa).

Residues 11-31 are disordered; it reads PPAAAPGPAPAPASAATASER.

This sequence belongs to the UPF0102 family.

This Verminephrobacter eiseniae (strain EF01-2) protein is UPF0102 protein Veis_0630.